A 142-amino-acid polypeptide reads, in one-letter code: Protein archease (142 aa).

The Ca(2+) site is built by aspartate 12, aspartate 141, and leucine 142.

This sequence belongs to the archease family.

Functionally, activates the tRNA-splicing ligase complex by facilitating the enzymatic turnover of catalytic subunit RtcB. Acts by promoting the guanylylation of RtcB, a key intermediate step in tRNA ligation. Can also alter the NTP specificity of RtcB such that ATP, dGTP or ITP is used efficiently. This chain is Protein archease, found in Thermococcus gammatolerans (strain DSM 15229 / JCM 11827 / EJ3).